Consider the following 246-residue polypeptide: Trypsin V-A (246 aa).

Residues 1–15 (MKICIFFTLLGTVAA) form the signal peptide. Positions 16 to 24 (FPTEDNDDR) are cleaved as a propeptide — activation peptide. The region spanning 25–244 (IVGGYTCQEH…YLNWIHQTIA (220 aa)) is the Peptidase S1 domain. 6 cysteine pairs are disulfide-bonded: cysteine 31–cysteine 160, cysteine 49–cysteine 65, cysteine 133–cysteine 233, cysteine 140–cysteine 206, cysteine 171–cysteine 185, and cysteine 196–cysteine 220. Histidine 64 acts as the Charge relay system in catalysis. Ca(2+) contacts are provided by glutamate 76, asparagine 78, and glutamate 86. Residue aspartate 108 is the Charge relay system of the active site. Catalysis depends on serine 200, which acts as the Charge relay system.

It belongs to the peptidase S1 family. Requires Ca(2+) as cofactor.

It localises to the secreted. The protein localises to the extracellular space. The enzyme catalyses Preferential cleavage: Arg-|-Xaa, Lys-|-Xaa.. This is Trypsin V-A from Rattus norvegicus (Rat).